The primary structure comprises 283 residues: Pantothenate synthetase (283 aa).

Position 34-41 (34-41 (MGALHEGH)) interacts with ATP. His-41 (proton donor) is an active-site residue. Gln-65 contributes to the (R)-pantoate binding site. Gln-65 contributes to the beta-alanine binding site. 152-155 (GQKD) contributes to the ATP binding site. A (R)-pantoate-binding site is contributed by Gln-158. ATP contacts are provided by residues Val-181 and 189–192 (MSSR).

The protein belongs to the pantothenate synthetase family. In terms of assembly, homodimer.

Its subcellular location is the cytoplasm. It catalyses the reaction (R)-pantoate + beta-alanine + ATP = (R)-pantothenate + AMP + diphosphate + H(+). Its pathway is cofactor biosynthesis; (R)-pantothenate biosynthesis; (R)-pantothenate from (R)-pantoate and beta-alanine: step 1/1. Functionally, catalyzes the condensation of pantoate with beta-alanine in an ATP-dependent reaction via a pantoyl-adenylate intermediate. The polypeptide is Pantothenate synthetase (Nitrobacter winogradskyi (strain ATCC 25391 / DSM 10237 / CIP 104748 / NCIMB 11846 / Nb-255)).